Consider the following 620-residue polypeptide: Preterminal protein (620 aa).

Positions 356 to 365 (RLPMRRRRRR) match the Nuclear localization signal motif. Ser545 carries the O-(5'-phospho-DNA)-serine modification.

Belongs to the adenoviridae terminal protein family. As to quaternary structure, heterodimer with the polymerase; this heterodimer binds to bp 9 to 18 of the genome. Interacts with host POU2F1; POU2F1 binds to the auxiliary sequences in the inverted terminal repeats and tethers the pTP-POL heterodimer to the origin DNA thereby participating in the assembly of the pre-initiation complex (POL-TP-DBP-NFIA-POU2F1). Preterminal protein is used to replicate viral genome, upon genomic encapsidation it is processed first into iTP and finally into TP by adenovirus protease.

The protein localises to the host nucleus matrix. Functionally, protein covalently bound to the viral DNA that acts as a primer for viral genomic replication by DNA strand displacement. Assembles on the viral origin of replication in an initiation complex with viral polymerase, DBP, host NFIA and host POU2F1/OCT1. During initiation, the polymerase covalently couples the first dCTP with Ser-580 of pTP. The terminal protein stimulates the template activity over 20 fold compared to protein-free templates. Neo-synthesized viral genomes are linked to two preterminal proteins, one for each 5' end. These new genomes are encapsidated in the nucleus, and during capsid maturation by viral protease, preterminal protein is first cleaved into intermediary (iTP), then into mature TP. May play a role in host nuclear matrix localization of genomic DNA. The polypeptide is Preterminal protein (Bovine adenovirus 2 (BAdV-2)).